The following is a 249-amino-acid chain: Ribosomal RNA small subunit methyltransferase J (249 aa).

S-adenosyl-L-methionine is bound by residues 97–98 (RD), 113–114 (ER), and Asp-167.

This sequence belongs to the methyltransferase superfamily. RsmJ family.

Its subcellular location is the cytoplasm. The enzyme catalyses guanosine(1516) in 16S rRNA + S-adenosyl-L-methionine = N(2)-methylguanosine(1516) in 16S rRNA + S-adenosyl-L-homocysteine + H(+). In terms of biological role, specifically methylates the guanosine in position 1516 of 16S rRNA. The sequence is that of Ribosomal RNA small subunit methyltransferase J from Aeromonas salmonicida (strain A449).